The sequence spans 241 residues: Ribonuclease PH (241 aa).

Phosphate is bound by residues arginine 87 and 125-127; that span reads GTR.

This sequence belongs to the RNase PH family. As to quaternary structure, homohexameric ring arranged as a trimer of dimers.

It carries out the reaction tRNA(n+1) + phosphate = tRNA(n) + a ribonucleoside 5'-diphosphate. Functionally, phosphorolytic 3'-5' exoribonuclease that plays an important role in tRNA 3'-end maturation. Removes nucleotide residues following the 3'-CCA terminus of tRNAs; can also add nucleotides to the ends of RNA molecules by using nucleoside diphosphates as substrates, but this may not be physiologically important. Probably plays a role in initiation of 16S rRNA degradation (leading to ribosome degradation) during starvation. This Nitrosomonas europaea (strain ATCC 19718 / CIP 103999 / KCTC 2705 / NBRC 14298) protein is Ribonuclease PH.